The following is a 528-amino-acid chain: GTPase Der (528 aa).

Acidic residues-rich tracts occupy residues 1-12 (MDVEGAFADEEE) and 30-62 (GYDD…PDFG). Positions 1 to 62 (MDVEGAFADE…EDDFAAPDFG (62 aa)) are disordered. EngA-type G domains follow at residues 90–253 (CTVA…PEEP) and 263–436 (RRVA…ENWD). Residues 96 to 103 (GRPNVGKS), 143 to 147 (DTGGW), 205 to 208 (NKFD), 269 to 276 (GKPNVGKS), 316 to 320 (DTAGL), and 381 to 384 (NKWD) contribute to the GTP site. The region spanning 437-519 (RRVSTGQLNN…PIRIAVRVRE (83 aa)) is the KH-like domain.

Belongs to the TRAFAC class TrmE-Era-EngA-EngB-Septin-like GTPase superfamily. EngA (Der) GTPase family. In terms of assembly, associates with the 50S ribosomal subunit.

In terms of biological role, GTPase that plays an essential role in the late steps of ribosome biogenesis. The chain is GTPase Der from Corynebacterium efficiens (strain DSM 44549 / YS-314 / AJ 12310 / JCM 11189 / NBRC 100395).